The chain runs to 375 residues: Serpin B5 (375 aa).

Asn-133, Asn-298, and Asn-361 each carry an N-linked (GlcNAc...) asparagine glycan.

The protein belongs to the serpin family. Ov-serpin subfamily. In terms of assembly, interacts with IRF6.

The protein localises to the secreted. It is found in the extracellular space. Functionally, tumor suppressor. It blocks the growth, invasion, and metastatic properties of mammary tumors. As it does not undergo the S (stressed) to R (relaxed) conformational transition characteristic of active serpins, it exhibits no serine protease inhibitory activity. This Mus musculus (Mouse) protein is Serpin B5 (Serpinb5).